We begin with the raw amino-acid sequence, 492 residues long: N-succinylglutamate 5-semialdehyde dehydrogenase (492 aa).

220 to 225 (GSASTG) contributes to the NAD(+) binding site. Residues Glu-243 and Cys-277 contribute to the active site.

This sequence belongs to the aldehyde dehydrogenase family. AstD subfamily.

It carries out the reaction N-succinyl-L-glutamate 5-semialdehyde + NAD(+) + H2O = N-succinyl-L-glutamate + NADH + 2 H(+). It functions in the pathway amino-acid degradation; L-arginine degradation via AST pathway; L-glutamate and succinate from L-arginine: step 4/5. In terms of biological role, catalyzes the NAD-dependent reduction of succinylglutamate semialdehyde into succinylglutamate. This is N-succinylglutamate 5-semialdehyde dehydrogenase from Salmonella paratyphi B (strain ATCC BAA-1250 / SPB7).